Consider the following 447-residue polypeptide: Glucose-6-phosphate isomerase (447 aa).

E288 (proton donor) is an active-site residue. Catalysis depends on residues H309 and K423.

The protein belongs to the GPI family.

The protein localises to the cytoplasm. It carries out the reaction alpha-D-glucose 6-phosphate = beta-D-fructose 6-phosphate. Its pathway is carbohydrate biosynthesis; gluconeogenesis. It participates in carbohydrate degradation; glycolysis; D-glyceraldehyde 3-phosphate and glycerone phosphate from D-glucose: step 2/4. Functionally, catalyzes the reversible isomerization of glucose-6-phosphate to fructose-6-phosphate. This chain is Glucose-6-phosphate isomerase, found in Lactobacillus gasseri (strain ATCC 33323 / DSM 20243 / BCRC 14619 / CIP 102991 / JCM 1131 / KCTC 3163 / NCIMB 11718 / NCTC 13722 / AM63).